The following is a 1265-amino-acid chain: Cohesin subunit SA-1 (1265 aa).

Positions 1–16 (MITSELSVLQDSTNES) are enriched in polar residues. Disordered stretches follow at residues 1–21 (MITS…VMHT) and 37–91 (DLEV…EGDP). Over residues 62–73 (TPGDRSRAEPGS) the composition is skewed to basic and acidic residues. An SCD domain is found at 303–388 (FVHRYRDAIA…NRFKDRIVSM (86 aa)). 2 disordered regions span residues 1063–1097 (GDED…KRVI) and 1111–1130 (DTIQ…TVLR). Over residues 1069-1082 (SVNSGGSNSKGSSV) the composition is skewed to low complexity. Positions 1083-1095 (RSKKGRPPLHKKR) are enriched in basic residues. Over residues 1111–1129 (DTIQTPGALTTPQLTSTVL) the composition is skewed to polar residues.

Belongs to the SCC3 family. Interacts directly with RAD21 in cohesin complex. Cohesin complexes are composed of a heterodimer between and SMC3, which are attached via their hinge domain, and RAD21 which link them at their heads, and one STAG protein (STAG1 OR STAG2). In cohesin complexes, STAG1 is mutually exclusive with STAG2. Phosphorylated by PLK1. The large dissociation of cohesin from chromosome arms during prophase is partly due to its phosphorylation.

The protein localises to the nucleus. It is found in the chromosome. Its subcellular location is the centromere. In terms of biological role, component of cohesin complex, a complex required for the cohesion of sister chromatids after DNA replication. The cohesin complex apparently forms a large proteinaceous ring within which sister chromatids can be trapped. At anaphase, the complex is cleaved and dissociates from chromatin, allowing sister chromatids to segregate. The cohesin complex may also play a role in spindle pole assembly during mitosis. The sequence is that of Cohesin subunit SA-1 (stag1) from Xenopus laevis (African clawed frog).